The chain runs to 120 residues: Immunoglobulin kappa variable 2-24 (120 aa).

The signal sequence occupies residues 1-19 (MRLLAQLLGLLMLWVPGSS). Residues 20-120 (GDIVMTQTPL…YYCMQATQFP (101 aa)) enclose the Ig-like domain. The tract at residues 21–43 (DIVMTQTPLSSPVTLGQPASISC) is framework-1. The cysteines at positions 43 and 113 are disulfide-linked. Residues 44 to 59 (RSSQSLVHSDGNTYLS) are complementarity-determining-1. Residues 60–74 (WLQQRPGQPPRLLIY) form a framework-2 region. Residues 75–81 (KISNRFS) are complementarity-determining-2. The framework-3 stretch occupies residues 82-113 (GVPDRFSGSGAGTDFTLKISRVEAEDVGVYYC). A complementarity-determining-3 region spans residues 114 to 120 (MQATQFP).

As to quaternary structure, immunoglobulins are composed of two identical heavy chains and two identical light chains; disulfide-linked.

Its subcellular location is the secreted. The protein localises to the cell membrane. In terms of biological role, v region of the variable domain of immunoglobulin light chains that participates in the antigen recognition. Immunoglobulins, also known as antibodies, are membrane-bound or secreted glycoproteins produced by B lymphocytes. In the recognition phase of humoral immunity, the membrane-bound immunoglobulins serve as receptors which, upon binding of a specific antigen, trigger the clonal expansion and differentiation of B lymphocytes into immunoglobulins-secreting plasma cells. Secreted immunoglobulins mediate the effector phase of humoral immunity, which results in the elimination of bound antigens. The antigen binding site is formed by the variable domain of one heavy chain, together with that of its associated light chain. Thus, each immunoglobulin has two antigen binding sites with remarkable affinity for a particular antigen. The variable domains are assembled by a process called V-(D)-J rearrangement and can then be subjected to somatic hypermutations which, after exposure to antigen and selection, allow affinity maturation for a particular antigen. The chain is Immunoglobulin kappa variable 2-24 from Homo sapiens (Human).